Reading from the N-terminus, the 438-residue chain is Exodeoxyribonuclease 7 large subunit (438 aa).

The interval 406 to 438 is disordered; that stretch reads ATSTGPTDDIPSSAARLPASPAPDARPASGPES.

The protein belongs to the XseA family. As to quaternary structure, heterooligomer composed of large and small subunits.

Its subcellular location is the cytoplasm. It catalyses the reaction Exonucleolytic cleavage in either 5'- to 3'- or 3'- to 5'-direction to yield nucleoside 5'-phosphates.. Bidirectionally degrades single-stranded DNA into large acid-insoluble oligonucleotides, which are then degraded further into small acid-soluble oligonucleotides. The protein is Exodeoxyribonuclease 7 large subunit of Clavibacter sepedonicus (Clavibacter michiganensis subsp. sepedonicus).